Reading from the N-terminus, the 164-residue chain is SsrA-binding protein (164 aa).

It belongs to the SmpB family.

The protein resides in the cytoplasm. In terms of biological role, required for rescue of stalled ribosomes mediated by trans-translation. Binds to transfer-messenger RNA (tmRNA), required for stable association of tmRNA with ribosomes. tmRNA and SmpB together mimic tRNA shape, replacing the anticodon stem-loop with SmpB. tmRNA is encoded by the ssrA gene; the 2 termini fold to resemble tRNA(Ala) and it encodes a 'tag peptide', a short internal open reading frame. During trans-translation Ala-aminoacylated tmRNA acts like a tRNA, entering the A-site of stalled ribosomes, displacing the stalled mRNA. The ribosome then switches to translate the ORF on the tmRNA; the nascent peptide is terminated with the 'tag peptide' encoded by the tmRNA and targeted for degradation. The ribosome is freed to recommence translation, which seems to be the essential function of trans-translation. This chain is SsrA-binding protein, found in Shewanella sediminis (strain HAW-EB3).